The following is a 494-amino-acid chain: Cytochrome P450 2A10 (494 aa).

Lys-379 is subject to N6-acetyllysine. Cys-439 contributes to the heme binding site.

This sequence belongs to the cytochrome P450 family. It depends on heme as a cofactor. Expressed in liver and lung as well as in nasal tissues.

It localises to the endoplasmic reticulum membrane. It is found in the microsome membrane. The catalysed reaction is an organic molecule + reduced [NADPH--hemoprotein reductase] + O2 = an alcohol + oxidized [NADPH--hemoprotein reductase] + H2O + H(+). Functionally, catalyzes the oxygenation of a variety of substrates, including ethanol and procarcinogens such as N-nitrosodiethylamine and phenacetin. Exhibits a high coumarin 7-hydroxylase activity. Converts also testosterone to androstenedione. This is Cytochrome P450 2A10 (CYP2A10) from Oryctolagus cuniculus (Rabbit).